The following is a 156-amino-acid chain: ATP synthase subunit b (156 aa).

A helical membrane pass occupies residues 11-31; sequence AIAFVLFVLFCMKYVWPPLMA.

The protein belongs to the ATPase B chain family. As to quaternary structure, F-type ATPases have 2 components, F(1) - the catalytic core - and F(0) - the membrane proton channel. F(1) has five subunits: alpha(3), beta(3), gamma(1), delta(1), epsilon(1). F(0) has three main subunits: a(1), b(2) and c(10-14). The alpha and beta chains form an alternating ring which encloses part of the gamma chain. F(1) is attached to F(0) by a central stalk formed by the gamma and epsilon chains, while a peripheral stalk is formed by the delta and b chains.

The protein resides in the cell inner membrane. F(1)F(0) ATP synthase produces ATP from ADP in the presence of a proton or sodium gradient. F-type ATPases consist of two structural domains, F(1) containing the extramembraneous catalytic core and F(0) containing the membrane proton channel, linked together by a central stalk and a peripheral stalk. During catalysis, ATP synthesis in the catalytic domain of F(1) is coupled via a rotary mechanism of the central stalk subunits to proton translocation. Functionally, component of the F(0) channel, it forms part of the peripheral stalk, linking F(1) to F(0). The protein is ATP synthase subunit b of Citrobacter koseri (strain ATCC BAA-895 / CDC 4225-83 / SGSC4696).